The primary structure comprises 165 residues: uncharacterized protein (165 aa).

A disordered region spans residues 28 to 97 (EASAPSGNPP…QLSQSLEVPT (70 aa)). Residues 34–47 (GNPPPPPPPPPPPI) are compositionally biased toward pro residues. 2 stretches are compositionally biased toward polar residues: residues 54–66 (KSLN…QLDN) and 73–94 (AQHT…QSLE).

This is an uncharacterized protein from Rickettsia prowazekii (strain Madrid E).